The chain runs to 166 residues: MANRKIFLITSLIISLLLIHIFIFSPLNEPEKNAKAGPLGLSDVSVPSAPKLPAKDSTDFEVFLENPVIIFSRPGCPYSAAAKKLLTETLRLDPPAVVVEVTDYEHTQELRDWLSSISDISTMPNIFVGGHSIGGSDSVRALYQEEKLQSTLDEWTHNKVLILPTD.

The 104-residue stretch at 56 to 159 (DSTDFEVFLE…STLDEWTHNK (104 aa)) folds into the Glutaredoxin domain. Residue Cys76 participates in [2Fe-2S] cluster binding.

The protein belongs to the glutaredoxin family. Monothiol subfamily. Homodimer.

It is found in the nucleus. Functionally, monothiol glutaredoxin involved in the biogenesis of iron-sulfur clusters. Binds one iron-sulfur cluster per dimer. The iron-sulfur cluster is bound between subunits, and is complexed by a bound glutathione and a cysteine residue from each subunit. The sequence is that of Monothiol glutaredoxin-3 (grx3) from Schizosaccharomyces pombe (strain 972 / ATCC 24843) (Fission yeast).